The chain runs to 341 residues: Basic membrane protein B (341 aa).

The N-terminal stretch at 1-14 (MRIAIFIFGILLTS) is a signal peptide. C15 is lipidated: N-palmitoyl cysteine. C15 carries S-diacylglycerol cysteine lipidation.

Belongs to the BMP lipoprotein family. In terms of assembly, monomer.

The protein resides in the cell inner membrane. May be part of an ABC-type nucleoside uptake system involved in the purine salvage pathway. The chain is Basic membrane protein B (bmpB) from Borreliella afzelii (strain PKo) (Borrelia afzelii).